A 462-amino-acid chain; its full sequence is Glutamate--tRNA ligase 2 (462 aa).

The 'HIGH' region signature appears at 8–18 (PSPTGYLHIGG). The 'KMSKS' region signature appears at 236–240 (KLSKR). ATP is bound at residue Lys-239.

This sequence belongs to the class-I aminoacyl-tRNA synthetase family. Glutamate--tRNA ligase type 1 subfamily. As to quaternary structure, monomer.

The protein localises to the cytoplasm. The catalysed reaction is tRNA(Glu) + L-glutamate + ATP = L-glutamyl-tRNA(Glu) + AMP + diphosphate. Its function is as follows. Catalyzes the attachment of glutamate to tRNA(Glu) in a two-step reaction: glutamate is first activated by ATP to form Glu-AMP and then transferred to the acceptor end of tRNA(Glu). The sequence is that of Glutamate--tRNA ligase 2 from Nitratiruptor sp. (strain SB155-2).